The sequence spans 625 residues: MNKQTLSFQAEVQQLLHLVTHSLYSNKEIFLRELISNASDACDKLRFEALNDAALYEDASTLEVRVSFDKEARTITIADNGIGMSADEVIANLGTIAKSGTREFVGKLSGEQAKDAQLIGQFGVGFYSGYIVADRITVESRRAGLKAEEGVRWSSAGTGDFEVENLVRAQRGTSVTLHLRDGEDEFLSAWKLKSVIGRYSDHISLPILMRGQVWDAEKSEYVTQDAWETVNKAAALWARPKSEITDAEYKSFYEQFSHDSTPPLAYTHNRVEGRSEYIQLLYLPAKAPHDLWNRDRQGGIKLYVKRVFIMDDAQALMPSYLRFVKGVIDSSDLPLNVSRELLQESRDVKAIREGSTKRVLGMLEEMAGSEDAARRDQYAAFWREFGAVLKEGVGEDHANRERLAKLLRFASTQADEGVSLADYLARMKDGQEAIYYITADTTAAARHSPQLEVFRKKGIEVLLLTDRVDEWMLSHLFEFEGKPLQSVAKGAVDLGKLQDEGEKQQAEAAAEAFKPVLEKLKDTLKERAKDVRVTTRLVDSPACLVVEDGDISGHLARLLKQAGQSAPTSLPILEVNTEHALVKRLDGSERFDDLAQVLFDQAVLAEGGQLDDPAAYVQRVNRLLV.

Residues 1–339 (MNKQTLSFQA…SSDLPLNVSR (339 aa)) form an a; substrate-binding region. The interval 340 to 557 (ELLQESRDVK…DGDISGHLAR (218 aa)) is b. The interval 558–625 (LLKQAGQSAP…YVQRVNRLLV (68 aa)) is c.

Belongs to the heat shock protein 90 family. In terms of assembly, homodimer.

Its subcellular location is the cytoplasm. Molecular chaperone. Has ATPase activity. The polypeptide is Chaperone protein HtpG (Methylibium petroleiphilum (strain ATCC BAA-1232 / LMG 22953 / PM1)).